We begin with the raw amino-acid sequence, 428 residues long: Cyclin-B1-1 (428 aa).

It belongs to the cyclin family. Cyclin AB subfamily. Interacts with FZR2/CCS52A1, FZR1/CCS52A2 and FZR3/CCS52B. As to expression, expressed in root tip, lateral root apex, shoot apex, leaf primordia, axillary buds, stamen and petal primordia, ovules and developing embryo.

It is found in the nucleus. The protein is Cyclin-B1-1 (CYCB1-1) of Arabidopsis thaliana (Mouse-ear cress).